Reading from the N-terminus, the 653-residue chain is UvrABC system protein C (653 aa).

A GIY-YIG domain is found at Asn-44–Val-122. Positions Ser-232–Val-267 constitute a UVR domain.

This sequence belongs to the UvrC family. In terms of assembly, interacts with UvrB in an incision complex.

It is found in the cytoplasm. In terms of biological role, the UvrABC repair system catalyzes the recognition and processing of DNA lesions. UvrC both incises the 5' and 3' sides of the lesion. The N-terminal half is responsible for the 3' incision and the C-terminal half is responsible for the 5' incision. The polypeptide is UvrABC system protein C (Chelativorans sp. (strain BNC1)).